The primary structure comprises 170 residues: Tubulin polymerization-promoting protein family member 2 (170 aa).

The disordered stretch occupies residues 127–170 (TGTHKERFDESGKGKGIAGREEMTDNTGYVSGYKGSGTYDKKTK). Residues 129–149 (THKERFDESGKGKGIAGREEM) show a composition bias toward basic and acidic residues.

Belongs to the TPPP family. As to expression, expressed in spermatids. Detected in liver cancer (at protein level).

The protein resides in the cytoplasm. The protein localises to the cytosol. Its subcellular location is the cell projection. It is found in the cilium. It localises to the flagellum. Functionally, probable regulator of microtubule dynamics required for sperm motility. In contrast to other members of the family, has no microtubule bundling activity. The protein is Tubulin polymerization-promoting protein family member 2 of Homo sapiens (Human).